Here is an 86-residue protein sequence, read N- to C-terminus: Photosystem I reaction center subunit PsaK 1 (86 aa).

Residues Met-1–Ala-8 constitute a propeptide that is removed on maturation. The next 2 helical transmembrane spans lie at Leu-14–Phe-34 and Pro-60–Leu-80.

This sequence belongs to the PsaG/PsaK family. The cyanobacterial PSI reaction center is composed of one copy each of PsaA,B,C,D,E,F,I,J,K,L,M and X, and forms dimeric and tetrameric complexes.

It localises to the cellular thylakoid membrane. This chain is Photosystem I reaction center subunit PsaK 1 (psaK1), found in Nostoc sp. (strain PCC 7120 / SAG 25.82 / UTEX 2576).